The primary structure comprises 378 residues: Cyclic GMP-AMP synthase-like receptor 1 (378 aa).

Glu71, Asp73, and Asp187 together coordinate Mg(2+). Residue 71-73 (EFD) coordinates ATP. GTP-binding positions include Asp187 and 233-240 (TSSFYEAE). ATP-binding positions include 237-240 (YEAE), Lys258, and 271-275 (SYHIK).

It belongs to the mab-21 family. Requires Mg(2+) as cofactor. Mn(2+) is required as a cofactor.

It catalyses the reaction GTP + ATP = 3',2'-cGAMP + 2 diphosphate. The catalysed reaction is GTP + ATP = pppA(2'-5')pG + diphosphate. It carries out the reaction pppA(2'-5')pG = 3',2'-cGAMP + diphosphate. With respect to regulation, the enzyme activity is specifically activated by double-stranded RNA (dsRNA). Recognizes long dsRNA (&gt;30 bp) with no preference for 5' RNA phosphorylation. In terms of biological role, nucleotidyltransferase that catalyzes the formation of cyclic GMP-AMP (3',2'-cGAMP) from ATP and GTP and plays a key role in antiviral innate immunity. Synthesizes 3',2'-cGAMP in a two-step reaction through production of the linear intermediate pppA(2'-5')pG. Acts as a key sensor of double-stranded RNA (dsRNA), the presence of dsRNA in the cytoplasm being a danger signal that triggers the immune responses. Directly binds dsRNA, activating the nucleotidyltransferase activity, leading to synthesis of 3',2'-cGAMP, a second messenger that binds to and activates Sting, thereby triggering the antiviral immune response via activation of the NF-kappa-B transcription factor Rel (Relish). 3',2'-cGAMP is protected from poxin cleavage. The polypeptide is Cyclic GMP-AMP synthase-like receptor 1 (Drosophila melanogaster (Fruit fly)).